The following is a 59-amino-acid chain: Small, acid-soluble spore protein H (59 aa).

It belongs to the SspH family.

Its subcellular location is the spore core. The chain is Small, acid-soluble spore protein H from Bacillus cereus (strain ZK / E33L).